The following is a 689-amino-acid chain: Glycine--tRNA ligase beta subunit (689 aa).

Belongs to the class-II aminoacyl-tRNA synthetase family. As to quaternary structure, tetramer of two alpha and two beta subunits.

Its subcellular location is the cytoplasm. It catalyses the reaction tRNA(Gly) + glycine + ATP = glycyl-tRNA(Gly) + AMP + diphosphate. The polypeptide is Glycine--tRNA ligase beta subunit (Shewanella baltica (strain OS195)).